A 697-amino-acid polypeptide reads, in one-letter code: Potassium-transporting ATPase ATP-binding subunit (697 aa).

Helical transmembrane passes span 55–75 (PIMF…FLPS), 82–102 (GWFN…ANFA), 245–265 (LTFI…YLGF), and 271–291 (VLVA…LSAI). Asp324 (4-aspartylphosphate intermediate) is an active-site residue. ATP is bound by residues Asp361, Glu365, 393 to 400 (FKAETRMS), and Lys412. Residues Asp535 and Asp539 each coordinate Mg(2+). The next 3 membrane-spanning stretches (helical) occupy residues 605 to 625 (FAII…LNIM), 633 to 653 (AILS…PLAM), and 677 to 697 (GGVI…GLFI).

Belongs to the cation transport ATPase (P-type) (TC 3.A.3) family. Type IA subfamily. The system is composed of three essential subunits: KdpA, KdpB and KdpC.

The protein resides in the cell membrane. The enzyme catalyses K(+)(out) + ATP + H2O = K(+)(in) + ADP + phosphate + H(+). Its function is as follows. Part of the high-affinity ATP-driven potassium transport (or Kdp) system, which catalyzes the hydrolysis of ATP coupled with the electrogenic transport of potassium into the cytoplasm. This subunit is responsible for energy coupling to the transport system and for the release of the potassium ions to the cytoplasm. In Bacillus cereus (strain AH187), this protein is Potassium-transporting ATPase ATP-binding subunit.